Reading from the N-terminus, the 206-residue chain is Potassium-transporting ATPase KdpC subunit (206 aa).

A helical membrane pass occupies residues 14–34 (VLAVFTLFGLGLAYSLIATGI).

This sequence belongs to the KdpC family. In terms of assembly, the system is composed of three essential subunits: KdpA, KdpB and KdpC.

It is found in the cell inner membrane. Part of the high-affinity ATP-driven potassium transport (or Kdp) system, which catalyzes the hydrolysis of ATP coupled with the electrogenic transport of potassium into the cytoplasm. This subunit acts as a catalytic chaperone that increases the ATP-binding affinity of the ATP-hydrolyzing subunit KdpB by the formation of a transient KdpB/KdpC/ATP ternary complex. In Xanthomonas axonopodis pv. citri (strain 306), this protein is Potassium-transporting ATPase KdpC subunit.